A 273-amino-acid chain; its full sequence is DnaJ homolog subfamily C member 27 (273 aa).

The segment at 1-18 is required for interaction with MAPK1; it reads METNVPKRKEPAKSLRIK. GTP-binding positions include 23-30, 71-75, and 134-137; these read GNAEVGKS, DMAGH, and NKID. In terms of domain architecture, J spans 217-273; that stretch reads DSWEMLGVRPGASREEVNKAYRKLAVLLHPDKCVAPGSEDAFKAVVNARTALLKNIK.

Belongs to the small GTPase superfamily. Rab family. As to quaternary structure, interacts directly with MAPK1 (wild-type and kinase-deficient forms). Interacts directly (in GTP-bound form) with MAP2K1 (wild-type and kinase-deficient forms).

Its subcellular location is the nucleus. GTPase which can activate the MEK/ERK pathway and induce cell transformation when overexpressed. May act as a nuclear scaffold for MAPK1, probably by association with MAPK1 nuclear export signal leading to enhanced ERK1/ERK2 signaling. The polypeptide is DnaJ homolog subfamily C member 27 (Dnajc27) (Mus musculus (Mouse)).